Here is an 831-residue protein sequence, read N- to C-terminus: Phenylalanine--tRNA ligase beta subunit (831 aa).

The 112-residue stretch at 44–155 (GPVDGPVTVG…GAAEPGADGA (112 aa)) folds into the tRNA-binding domain. Residues 414 to 489 (WSPPPIRMGV…RLEGLEVIPS (76 aa)) form the B5 domain. 4 residues coordinate Mg(2+): Asp-467, Asp-473, Glu-476, and Glu-477. An FDX-ACB domain is found at 737–830 (SPYPAVFQDV…AAERVGAVLR (94 aa)).

This sequence belongs to the phenylalanyl-tRNA synthetase beta subunit family. Type 1 subfamily. In terms of assembly, tetramer of two alpha and two beta subunits. Mg(2+) is required as a cofactor.

Its subcellular location is the cytoplasm. The enzyme catalyses tRNA(Phe) + L-phenylalanine + ATP = L-phenylalanyl-tRNA(Phe) + AMP + diphosphate + H(+). The protein is Phenylalanine--tRNA ligase beta subunit (pheT) of Mycobacterium tuberculosis (strain ATCC 25618 / H37Rv).